We begin with the raw amino-acid sequence, 192 residues long: MGVHECPAWLWLLLSLVSLPLGLPVPGAPPRLICDSRVLERYLLEAKEAENVTMGCSESCSLNENITVPDTKVNFYAWKRMEVGQQAVEVWQGLALLSEAVLRGQAVLANSSQPFEPLQLHMDKAISGLRSITTLLRALGAQEAISLPDAASAAPLRTITADTFCKLFRVYSNFLRGKLKLYTGEACRRGDR.

The signal sequence occupies residues 1 to 27 (MGVHECPAWLWLLLSLVSLPLGLPVPG). Cystine bridges form between Cys-34–Cys-187 and Cys-56–Cys-60. Asn-51 carries N-linked (GlcNAc...) asparagine glycosylation. N-linked (GlcNAc...) asparagine glycans are attached at residues Asn-65 and Asn-110. O-linked (GalNAc...) serine glycosylation occurs at Ser-152.

This sequence belongs to the EPO/TPO family. As to expression, produced by kidney or liver of adult mammals and by liver of fetal or neonatal mammals.

It localises to the secreted. Functionally, hormone involved in the regulation of erythrocyte proliferation and differentiation and the maintenance of a physiological level of circulating erythrocyte mass. Binds to EPOR leading to EPOR dimerization and JAK2 activation thereby activating specific downstream effectors, including STAT1 and STAT3. This is Erythropoietin (EPO) from Macaca fascicularis (Crab-eating macaque).